Reading from the N-terminus, the 162-residue chain is Cyclic pyranopterin monophosphate synthase (162 aa).

Substrate is bound by residues 75–77 (LCH) and 113–114 (ME). D128 is an active-site residue.

The protein belongs to the MoaC family. In terms of assembly, homohexamer; trimer of dimers.

It carries out the reaction (8S)-3',8-cyclo-7,8-dihydroguanosine 5'-triphosphate = cyclic pyranopterin phosphate + diphosphate. Its pathway is cofactor biosynthesis; molybdopterin biosynthesis. In terms of biological role, catalyzes the conversion of (8S)-3',8-cyclo-7,8-dihydroguanosine 5'-triphosphate to cyclic pyranopterin monophosphate (cPMP). In Klebsiella pneumoniae subsp. pneumoniae (strain ATCC 700721 / MGH 78578), this protein is Cyclic pyranopterin monophosphate synthase.